We begin with the raw amino-acid sequence, 254 residues long: Germin-like protein 4-1 (254 aa).

The first 27 residues, 1–27 (MASRAFAAVFAAVALVVCSSVLPRALA), serve as a signal peptide directing secretion. Cysteines 37 and 52 form a disulfide. The Cupin type-1 domain occupies 67-220 (KALGVPGNTV…AFMIDKDQVD (154 aa)). Mn(2+) is bound by residues His115, His117, Glu122, and His166.

The protein belongs to the germin family. Oligomer (believed to be a pentamer but probably hexamer).

The protein resides in the secreted. It is found in the extracellular space. Its subcellular location is the apoplast. Functionally, may play a role in plant defense. Probably has no oxalate oxidase activity even if the active site is conserved. The protein is Germin-like protein 4-1 of Oryza sativa subsp. japonica (Rice).